The chain runs to 466 residues: 3-isopropylmalate dehydratase large subunit (466 aa).

3 residues coordinate [4Fe-4S] cluster: C347, C407, and C410.

The protein belongs to the aconitase/IPM isomerase family. LeuC type 1 subfamily. In terms of assembly, heterodimer of LeuC and LeuD. It depends on [4Fe-4S] cluster as a cofactor.

It catalyses the reaction (2R,3S)-3-isopropylmalate = (2S)-2-isopropylmalate. It participates in amino-acid biosynthesis; L-leucine biosynthesis; L-leucine from 3-methyl-2-oxobutanoate: step 2/4. Functionally, catalyzes the isomerization between 2-isopropylmalate and 3-isopropylmalate, via the formation of 2-isopropylmaleate. This Escherichia coli O139:H28 (strain E24377A / ETEC) protein is 3-isopropylmalate dehydratase large subunit.